We begin with the raw amino-acid sequence, 698 residues long: Elongation factor G (698 aa).

The region spanning 6–281 is the tr-type G domain; it reads ENIRNIGICA…AVVDYLPSPI (276 aa). GTP-binding positions include 15–22, 79–83, and 133–136; these read AHIDAGKT, DTPGH, and NKMD.

It belongs to the TRAFAC class translation factor GTPase superfamily. Classic translation factor GTPase family. EF-G/EF-2 subfamily.

The protein resides in the cytoplasm. Its function is as follows. Catalyzes the GTP-dependent ribosomal translocation step during translation elongation. During this step, the ribosome changes from the pre-translocational (PRE) to the post-translocational (POST) state as the newly formed A-site-bound peptidyl-tRNA and P-site-bound deacylated tRNA move to the P and E sites, respectively. Catalyzes the coordinated movement of the two tRNA molecules, the mRNA and conformational changes in the ribosome. This Rickettsia bellii (strain RML369-C) protein is Elongation factor G.